A 155-amino-acid polypeptide reads, in one-letter code: uncharacterized protein (155 aa).

The SCP domain maps to isoleucine 37–asparagine 140.

This is an uncharacterized protein from Borreliella burgdorferi (strain ATCC 35210 / DSM 4680 / CIP 102532 / B31) (Borrelia burgdorferi).